Consider the following 127-residue polypeptide: Small ribosomal subunit protein uS13 (127 aa).

Positions 97–127 (PVRGQRTKTNARTRKGPRKTVAGKKGVKDLR) are disordered. Over residues 101–118 (QRTKTNARTRKGPRKTVA) the composition is skewed to basic residues.

The protein belongs to the universal ribosomal protein uS13 family. Part of the 30S ribosomal subunit. Forms a loose heterodimer with protein S19. Forms two bridges to the 50S subunit in the 70S ribosome.

Functionally, located at the top of the head of the 30S subunit, it contacts several helices of the 16S rRNA. In the 70S ribosome it contacts the 23S rRNA (bridge B1a) and protein L5 of the 50S subunit (bridge B1b), connecting the 2 subunits; these bridges are implicated in subunit movement. Contacts the tRNAs in the A and P-sites. The polypeptide is Small ribosomal subunit protein uS13 (Rhodopirellula baltica (strain DSM 10527 / NCIMB 13988 / SH1)).